Reading from the N-terminus, the 155-residue chain is Xanthine-guanine phosphoribosyltransferase (155 aa).

5-phospho-alpha-D-ribose 1-diphosphate contacts are provided by residues Arg37 to Gly38 and Asp91 to Thr99. Asp92 is a Mg(2+) binding site. Guanine-binding residues include Asp95 and Ile138. Xanthine is bound by residues Asp95 and Ile138. Residues Asp95–Thr99 and Trp137–Ile138 each bind GMP.

Belongs to the purine/pyrimidine phosphoribosyltransferase family. XGPT subfamily. In terms of assembly, homotetramer. Mg(2+) serves as cofactor.

It is found in the cell inner membrane. The catalysed reaction is GMP + diphosphate = guanine + 5-phospho-alpha-D-ribose 1-diphosphate. It catalyses the reaction XMP + diphosphate = xanthine + 5-phospho-alpha-D-ribose 1-diphosphate. The enzyme catalyses IMP + diphosphate = hypoxanthine + 5-phospho-alpha-D-ribose 1-diphosphate. It participates in purine metabolism; GMP biosynthesis via salvage pathway; GMP from guanine: step 1/1. The protein operates within purine metabolism; XMP biosynthesis via salvage pathway; XMP from xanthine: step 1/1. Acts on guanine, xanthine and to a lesser extent hypoxanthine. In terms of biological role, purine salvage pathway enzyme that catalyzes the transfer of the ribosyl-5-phosphate group from 5-phospho-alpha-D-ribose 1-diphosphate (PRPP) to the N9 position of the 6-oxopurines guanine and xanthine to form the corresponding ribonucleotides GMP (guanosine 5'-monophosphate) and XMP (xanthosine 5'-monophosphate), with the release of PPi. To a lesser extent, also acts on hypoxanthine. The chain is Xanthine-guanine phosphoribosyltransferase from Haemophilus influenzae (strain ATCC 51907 / DSM 11121 / KW20 / Rd).